We begin with the raw amino-acid sequence, 272 residues long: Imidazole glycerol phosphate synthase subunit HisF (272 aa).

Catalysis depends on residues D11 and D130.

This sequence belongs to the HisA/HisF family. As to quaternary structure, heterodimer of HisH and HisF.

It is found in the cytoplasm. The enzyme catalyses 5-[(5-phospho-1-deoxy-D-ribulos-1-ylimino)methylamino]-1-(5-phospho-beta-D-ribosyl)imidazole-4-carboxamide + L-glutamine = D-erythro-1-(imidazol-4-yl)glycerol 3-phosphate + 5-amino-1-(5-phospho-beta-D-ribosyl)imidazole-4-carboxamide + L-glutamate + H(+). It functions in the pathway amino-acid biosynthesis; L-histidine biosynthesis; L-histidine from 5-phospho-alpha-D-ribose 1-diphosphate: step 5/9. Its function is as follows. IGPS catalyzes the conversion of PRFAR and glutamine to IGP, AICAR and glutamate. The HisF subunit catalyzes the cyclization activity that produces IGP and AICAR from PRFAR using the ammonia provided by the HisH subunit. The chain is Imidazole glycerol phosphate synthase subunit HisF from Methanococcus maripaludis (strain DSM 14266 / JCM 13030 / NBRC 101832 / S2 / LL).